A 396-amino-acid polypeptide reads, in one-letter code: Tail sheath protein (396 aa).

The protein belongs to the myoviridae tail sheath protein family. Homomultimer.

The protein localises to the virion. It localises to the host cytoplasm. Its function is as follows. Polymerizes as an extended helical structure around the baseplate-tail tube complex. During ejection, the sheath shifts to a contracted form, thereby making the inner tail tube protrude through the host cell envelope. The polypeptide is Tail sheath protein (FI) (Enterobacteriaceae (Bacteriophage P2)).